Here is a 207-residue protein sequence, read N- to C-terminus: Cytochrome c biogenesis ATP-binding export protein CcmA (207 aa).

Residues 4–207 form the ABC transporter domain; that stretch reads LEARELLCER…RISLTQTRAA (204 aa). 36–43 contributes to the ATP binding site; that stretch reads GSNGAGKT.

It belongs to the ABC transporter superfamily. CcmA exporter (TC 3.A.1.107) family. The complex is composed of two ATP-binding proteins (CcmA) and two transmembrane proteins (CcmB).

The protein localises to the cell inner membrane. It catalyses the reaction heme b(in) + ATP + H2O = heme b(out) + ADP + phosphate + H(+). Part of the ABC transporter complex CcmAB involved in the biogenesis of c-type cytochromes; once thought to export heme, this seems not to be the case, but its exact role is uncertain. Responsible for energy coupling to the transport system. The chain is Cytochrome c biogenesis ATP-binding export protein CcmA from Shigella flexneri.